The primary structure comprises 313 residues: UPF0252 protein AF_0384 (313 aa).

This sequence belongs to the UPF0252 family.

This Archaeoglobus fulgidus (strain ATCC 49558 / DSM 4304 / JCM 9628 / NBRC 100126 / VC-16) protein is UPF0252 protein AF_0384.